A 402-amino-acid polypeptide reads, in one-letter code: Apolipoprotein L3 (402 aa).

This sequence belongs to the apolipoprotein L family. Widely expressed; the highest levels are in prostate, lung and placenta; also detected in kidney, bone marrow, spleen, thymus, spinal cord, adrenal gland, salivary gland, trachea and mammary gland; levels are low in brain, heart, fetal liver, pancreas and testis.

It localises to the cytoplasm. Its function is as follows. May affect the movement of lipids in the cytoplasm or allow the binding of lipids to organelles. This Homo sapiens (Human) protein is Apolipoprotein L3 (APOL3).